The primary structure comprises 466 residues: A-type ATP synthase subunit B (466 aa).

The protein belongs to the ATPase alpha/beta chains family. As to quaternary structure, has multiple subunits with at least A(3), B(3), C, D, E, F, H, I and proteolipid K(x).

It is found in the cell membrane. Functionally, component of the A-type ATP synthase that produces ATP from ADP in the presence of a proton gradient across the membrane. The B chain is a regulatory subunit. The polypeptide is A-type ATP synthase subunit B (Metallosphaera sedula (strain ATCC 51363 / DSM 5348 / JCM 9185 / NBRC 15509 / TH2)).